The following is a 385-amino-acid chain: GDP-mannose-dependent alpha-(1-6)-phosphatidylinositol monomannoside mannosyltransferase (385 aa).

Positions 205, 210, 262, and 299 each coordinate GDP-alpha-D-mannose.

It belongs to the glycosyltransferase group 1 family. Glycosyltransferase 4 subfamily.

The enzyme catalyses a 1,2-diacyl-sn-glycero-3-phospho-[alpha-D-mannopyranosyl-(1&lt;-&gt;6)-D-myo-inositol] + GDP-alpha-D-mannose = a 2,6-O-bis(alpha-D-mannopyranosyl)-1-phosphatidyl-1D-myo-inositol + GDP + H(+). The catalysed reaction is a 1,2-diacyl-sn-glycero-3-phospho-[alpha-D-6-acyl-mannopyranosyl-(1&lt;-&gt;6)-D-myo-inositol] + GDP-alpha-D-mannose = a 2-O-(alpha-D-mannosyl)-6-O-(6-O-acyl-alpha-D-mannosyl)-1-phosphatidyl-1D-myo-inositol + GDP + H(+). Its pathway is phospholipid metabolism; phosphatidylinositol metabolism. Functionally, involved in the biosynthesis of phosphatidyl-myo-inositol mannosides (PIM) which are early precursors in the biosynthesis of lipomannans (LM) and lipoarabinomannans (LAM). Catalyzes the addition of a mannosyl residue from GDP-D-mannose (GDP-Man) to the position 6 of a phosphatidyl-myo-inositol bearing an alpha-1,2-linked mannose residue (PIM1) to generate phosphatidyl-myo-inositol bearing alpha-1,2- and alpha-1,6-linked mannose residues (Ac1PIM2). PimB also catalyzes the addition of a mannosyl residue from GDP-Man to the position 6 of phosphatidyl-myo-inositol bearing an acylated alpha-1,2-linked mannose residue (Ac1PIM1) to generate monoacylated phosphatidyl-myo-inositol bearing alpha-1,2- and alpha-1,6-linked mannose residues (Ac1PIM2). The addition of the second mannosyl residue by PimB preferentially occurs before the acylation of the mannosyl residue transferred by PimA. Also able to transfer a mannosyl residue from GDP-Man to the position 6 of a phosphatidyl-myo-inositol (PI), but this reaction is very slow. In Mycobacterium tuberculosis (strain CDC 1551 / Oshkosh), this protein is GDP-mannose-dependent alpha-(1-6)-phosphatidylinositol monomannoside mannosyltransferase.